Here is a 308-residue protein sequence, read N- to C-terminus: Methionine synthase (308 aa).

Zn(2+) contacts are provided by histidine 192, cysteine 194, glutamate 215, and cysteine 282.

This sequence belongs to the archaeal MetE family. Zn(2+) serves as cofactor.

Its pathway is amino-acid biosynthesis; L-methionine biosynthesis via de novo pathway. Functionally, catalyzes the transfer of a methyl group to L-homocysteine resulting in methionine formation. Can use methylcobalamin and methylcobinamide as methyl donors, but methylcobalamin is not considered to be the physiological substrate. The protein is Methionine synthase of Methanocaldococcus jannaschii (strain ATCC 43067 / DSM 2661 / JAL-1 / JCM 10045 / NBRC 100440) (Methanococcus jannaschii).